The chain runs to 181 residues: NADH-quinone oxidoreductase subunit I (181 aa).

4Fe-4S ferredoxin-type domains lie at Leu44–Ala74 and Arg90–Asp119. Residues Cys54, Cys57, Cys60, Cys64, Cys99, Cys102, Cys105, and Cys109 each contribute to the [4Fe-4S] cluster site.

This sequence belongs to the complex I 23 kDa subunit family. NDH-1 is composed of 14 different subunits. Subunits NuoA, H, J, K, L, M, N constitute the membrane sector of the complex. [4Fe-4S] cluster serves as cofactor.

It is found in the cell membrane. The catalysed reaction is a quinone + NADH + 5 H(+)(in) = a quinol + NAD(+) + 4 H(+)(out). NDH-1 shuttles electrons from NADH, via FMN and iron-sulfur (Fe-S) centers, to quinones in the respiratory chain. The immediate electron acceptor for the enzyme in this species is believed to be menaquinone. Couples the redox reaction to proton translocation (for every two electrons transferred, four hydrogen ions are translocated across the cytoplasmic membrane), and thus conserves the redox energy in a proton gradient. In Mycobacterium marinum (strain ATCC BAA-535 / M), this protein is NADH-quinone oxidoreductase subunit I.